Reading from the N-terminus, the 397-residue chain is P-selectin glycoprotein ligand 1 (397 aa).

A signal peptide spans 1–17; that stretch reads MSPSFLVLLTILGPGNS. The propeptide occupies 18–41; the sequence is LQLQDPWGHETKEAPGPVHLRERR. Residues 18 to 307 lie on the Extracellular side of the membrane; sequence LQLQDPWGHE…SSDLIPVKQC (290 aa). Tyr-54 bears the Sulfotyrosine mark. O-linked (GalNAc...) threonine glycosylation is present at Thr-58. An N-linked (GlcNAc...) asparagine glycan is attached at Asn-66. The tract at residues 89–261 is disordered; sequence TSAGTSERAT…TMETASTESN (173 aa). The segment covering 120–198 has biased composition (polar residues); that stretch reads STDSATQWSL…PMEAETSQPA (79 aa). Repeat copies occupy residues 126 to 135, 136 to 145, 146 to 155, 156 to 165, 166 to 175, 176 to 185, 186 to 195, 196 to 205, 206 to 215, and 216 to 225. A 10 X 10 AA tandem repeats region spans residues 126–225; sequence QWSLTSVETV…KPAPTEAETT (100 aa). The span at 236-261 shows a compositional bias: polar residues; it reads LFTTSAATEVPSTEPTTMETASTESN. Asn-261 is a glycosylation site (N-linked (GlcNAc...) asparagine). The chain crosses the membrane as a helical span at residues 308–328; sequence LLIILILASLATIFLVCTVVL. The Cytoplasmic portion of the chain corresponds to 329–397; sequence AVRLSRKTHM…DDLTLHSFLP (69 aa). The disordered stretch occupies residues 364–390; sequence PVTANGGLPKVQDLKTEPSGDRDGDDL. Positions 375-390 are enriched in basic and acidic residues; sequence QDLKTEPSGDRDGDDL. Thr-391 carries the phosphothreonine modification. Ser-394 is modified (phosphoserine).

In terms of assembly, homodimer; disulfide-linked. Interacts with P- and E-selectins, through their lectin/EGF domains. Interaction with P-selectin requires sialyl Lewis X glycan modification and tyrosine sulfation, probably on Tyr-54, for high affinity binding. Dimerization appears not to be required for P-selectin/SELP binding. Interacts with SNX20. Interacts with MSN and SYK; mediates SYK activation downstream of SELPLG. Interacts with HAVCR1. In terms of processing, displays complex, core-2, sialylated and fucosylated O-linked oligosaccharides, at least some of which appear to contain poly-N-acetyllactosamine with varying degrees of substitution. Mainly disialylated or neutral forms of the core-2 tetrasaccharide, Galbeta1--&gt;4GlcNAcbeta1--&gt;6(Galbeta1--&gt;3)GalNAcOH. The GlcN:GalN ratio is approximately 2:1 and the Man:Fuc ratio 3:5. Contains about 14% fucose with alpha-1,3 linkage present in two forms: One species is a disialylated, monofucosylated glycan, and the other, a monosialylated, trifucosylated glycan with a polylactosamine backbone. The fucosylated forms carry the Lewis antigen and are important for interaction with selectins and for functioning. No sulfated O-glycans. Some N-glycosylation. In terms of tissue distribution, highly expressed in blood, bone marrow, brain, adipose tissue, spleen, and thymus. Also expressed in heart, kidney, liver, muscle, ovary, and stomach.

The protein localises to the cell membrane. In terms of biological role, a SLe(x)-type proteoglycan, which through high affinity, calcium-dependent interactions with E- and P-selectins, mediates rapid rolling of leukocytes over vascular surfaces during the initial steps in inflammation. Critical for the initial leukocyte capture. This chain is P-selectin glycoprotein ligand 1 (Selplg), found in Mus musculus (Mouse).